Reading from the N-terminus, the 417-residue chain is Tyrosine aminotransferase (417 aa).

Position 249 is an N6-(pyridoxal phosphate)lysine (lysine 249).

Belongs to the class-I pyridoxal-phosphate-dependent aminotransferase family. In terms of assembly, homodimer. Pyridoxal 5'-phosphate is required as a cofactor.

The catalysed reaction is L-tyrosine + 2-oxoglutarate = 3-(4-hydroxyphenyl)pyruvate + L-glutamate. It functions in the pathway amino-acid degradation; L-phenylalanine degradation; acetoacetate and fumarate from L-phenylalanine: step 2/6. Transaminase involved in tyrosine breakdown. Converts tyrosine to p-hydroxyphenylpyruvate. Has much lower affinity and transaminase activity towards phenylalanine. The polypeptide is Tyrosine aminotransferase (tat) (Dictyostelium discoideum (Social amoeba)).